The chain runs to 309 residues: D-alanine--D-alanine ligase (309 aa).

The ATP-grasp domain maps to 110–305 (KLCWTGAGLP…FQELVWHILE (196 aa)). An ATP-binding site is contributed by 136–191 (RQALGFPVIVKPAEEGSSIGMSRAATAEELAQAWERASGYGCAVFAERWIDGVEYT). 3 residues coordinate Mg(2+): Asp-259, Glu-272, and Asn-274.

The protein belongs to the D-alanine--D-alanine ligase family. Requires Mg(2+) as cofactor. The cofactor is Mn(2+).

The protein localises to the cytoplasm. The catalysed reaction is 2 D-alanine + ATP = D-alanyl-D-alanine + ADP + phosphate + H(+). It functions in the pathway cell wall biogenesis; peptidoglycan biosynthesis. Cell wall formation. The sequence is that of D-alanine--D-alanine ligase from Methylococcus capsulatus (strain ATCC 33009 / NCIMB 11132 / Bath).